The chain runs to 149 residues: Large ribosomal subunit protein eL19 (149 aa).

Residues 67 to 90 (KRKLQKRKGRRRGHGSRKGAKGAR) are disordered.

This sequence belongs to the eukaryotic ribosomal protein eL19 family. In terms of assembly, part of the 50S ribosomal subunit.

Binds to the 23S rRNA. The protein is Large ribosomal subunit protein eL19 of Archaeoglobus fulgidus (strain ATCC 49558 / DSM 4304 / JCM 9628 / NBRC 100126 / VC-16).